A 463-amino-acid polypeptide reads, in one-letter code: tRNA modification GTPase MnmE (463 aa).

(6S)-5-formyl-5,6,7,8-tetrahydrofolate is bound by residues R26, E88, and R127. One can recognise a TrmE-type G domain in the interval 224 to 383 (GLATAIIGRP…LEQRIAKMFF (160 aa)). N234 is a K(+) binding site. Residues 234 to 239 (NVGKSS), 253 to 259 (TDVAGTT), and 278 to 281 (DTAG) each bind GTP. S238 is a binding site for Mg(2+). Positions 253, 255, and 258 each coordinate K(+). T259 serves as a coordination point for Mg(2+). K463 is a binding site for (6S)-5-formyl-5,6,7,8-tetrahydrofolate.

The protein belongs to the TRAFAC class TrmE-Era-EngA-EngB-Septin-like GTPase superfamily. TrmE GTPase family. Homodimer. Heterotetramer of two MnmE and two MnmG subunits. K(+) serves as cofactor.

The protein localises to the cytoplasm. Exhibits a very high intrinsic GTPase hydrolysis rate. Involved in the addition of a carboxymethylaminomethyl (cmnm) group at the wobble position (U34) of certain tRNAs, forming tRNA-cmnm(5)s(2)U34. The polypeptide is tRNA modification GTPase MnmE (Lactiplantibacillus plantarum (strain ATCC BAA-793 / NCIMB 8826 / WCFS1) (Lactobacillus plantarum)).